We begin with the raw amino-acid sequence, 239 residues long: Purine nucleoside phosphorylase DeoD-type (239 aa).

A purine D-ribonucleoside is bound at residue histidine 5. 2 residues coordinate phosphate: glycine 21 and arginine 25. N6-acetyllysine is present on lysine 27. Phosphate is bound by residues arginine 44 and 88-91; that span reads RVGS. Residues 180–182 and 204–205 each bind a purine D-ribonucleoside; these read EME and SD. Residue aspartate 205 is the Proton donor of the active site.

It belongs to the PNP/UDP phosphorylase family. Homohexamer; trimer of homodimers.

The catalysed reaction is a purine D-ribonucleoside + phosphate = a purine nucleobase + alpha-D-ribose 1-phosphate. It catalyses the reaction a purine 2'-deoxy-D-ribonucleoside + phosphate = a purine nucleobase + 2-deoxy-alpha-D-ribose 1-phosphate. Catalyzes the reversible phosphorolytic breakdown of the N-glycosidic bond in the beta-(deoxy)ribonucleoside molecules, with the formation of the corresponding free purine bases and pentose-1-phosphate. The sequence is that of Purine nucleoside phosphorylase DeoD-type from Escherichia coli O81 (strain ED1a).